A 186-amino-acid chain; its full sequence is Lactoylglutathione lyase (186 aa).

The 148-residue stretch at 28 to 175 folds into the VOC domain; it reads FMQQTMFRIK…DGYWIELFDR (148 aa). Substrate-binding residues include Gln31 and Arg35. Gln31 is a Zn(2+) binding site. Glu97 is a Zn(2+) binding site. Residues Asn101, Arg121, His125, and 155 to 156 contribute to the substrate site; that span reads KM. His125 is a Zn(2+) binding site. Zn(2+) is bound at residue Glu171. Residue Glu171 is the Proton donor/acceptor of the active site.

This sequence belongs to the glyoxalase I family. Requires Zn(2+) as cofactor.

It catalyses the reaction (R)-S-lactoylglutathione = methylglyoxal + glutathione. The protein operates within secondary metabolite metabolism; methylglyoxal degradation; (R)-lactate from methylglyoxal: step 1/2. Its function is as follows. Catalyzes the conversion of hemimercaptal, formed from methylglyoxal and glutathione, to S-lactoylglutathione. This is Lactoylglutathione lyase from Cicer arietinum (Chickpea).